Reading from the N-terminus, the 187-residue chain is Transcriptional regulator VspR (187 aa).

In terms of biological role, represses the transcription of several genes encoded within the Vibrio 7th pandemic island-1 (VSP-1), including dncV, VC_0176, VC_0178 and VC_0180. The protein is Transcriptional regulator VspR (vspR) of Vibrio cholerae serotype O1 (strain ATCC 39315 / El Tor Inaba N16961).